The primary structure comprises 584 residues: Acetylcholinesterase (584 aa).

Residue Ala-1 is a signal peptide. Cys-70 and Cys-97 are oxidised to a cystine. The active-site Acyl-ester intermediate is Ser-204. Cys-258 and Cys-273 form a disulfide bridge. Asn-266 is a glycosylation site (N-linked (GlcNAc...) asparagine). Catalysis depends on Glu-335, which acts as the Charge relay system. An N-linked (GlcNAc...) asparagine glycan is attached at Asn-351. An intrachain disulfide couples Cys-410 to Cys-530. His-448 (charge relay system) is an active-site residue. Asn-465 is a glycosylation site (N-linked (GlcNAc...) asparagine).

The protein belongs to the type-B carboxylesterase/lipase family. In terms of assembly, homotetramer; composed of disulfide-linked homodimers. Interacts with PRIMA1. The interaction with PRIMA1 is required to anchor it to the basal lamina of cells and organize into tetramers.

Its subcellular location is the synapse. It localises to the secreted. The protein localises to the cell membrane. It carries out the reaction acetylcholine + H2O = choline + acetate + H(+). Terminates signal transduction at the neuromuscular junction by rapid hydrolysis of the acetylcholine released into the synaptic cleft. The polypeptide is Acetylcholinesterase (ACHE) (Oryctolagus cuniculus (Rabbit)).